A 110-amino-acid chain; its full sequence is MSWRGRSTYYWPRPRRYVQPPEMIGPMRPEQFSDEVEPATPEEGEPATQRQDPAAAQEGEDEGASAGQGPKPEAHSQEQGHPQTGCECEDGPDGQEMDPPNPEEVKTPEE.

The segment at M1–E110 is disordered. Composition is skewed to acidic residues over residues F32 to E45 and E87 to E96.

The protein belongs to the GAGE family.

The protein is G antigen 2E (GAGE2E) of Homo sapiens (Human).